Consider the following 336-residue polypeptide: Tyrosine recombinase XerC (336 aa).

The Core-binding (CB) domain occupies 14–106 (VANCRWLGEF…SVKSFYRFLL (93 aa)). The region spanning 127–330 (KIPDFLSEEE…TFNRLRDAYT (204 aa)) is the Tyr recombinase domain. Residues arginine 183, lysine 207, histidine 282, arginine 285, and histidine 308 contribute to the active site. Tyrosine 317 acts as the O-(3'-phospho-DNA)-tyrosine intermediate in catalysis.

It belongs to the 'phage' integrase family. XerC subfamily. In terms of assembly, forms a cyclic heterotetrameric complex composed of two molecules of XerC and two molecules of XerD.

Its subcellular location is the cytoplasm. Site-specific tyrosine recombinase, which acts by catalyzing the cutting and rejoining of the recombining DNA molecules. The XerC-XerD complex is essential to convert dimers of the bacterial chromosome into monomers to permit their segregation at cell division. It also contributes to the segregational stability of plasmids. This is Tyrosine recombinase XerC from Chlorobaculum tepidum (strain ATCC 49652 / DSM 12025 / NBRC 103806 / TLS) (Chlorobium tepidum).